An 804-amino-acid chain; its full sequence is Angiotensin-converting enzyme 2 (804 aa).

Residues 1 to 17 form the signal peptide; sequence MTGSFWLLLSLVAVTAA. Residues 18–739 lie on the Extracellular side of the membrane; sequence QSTTEEQAKT…LGPPYEPPVT (722 aa). The Peptidase M2 domain maps to 19-606; sequence STTEEQAKTF…QNRNSFVGWS (588 aa). N53 and N90 each carry an N-linked (GlcNAc...) asparagine glycan. R168 contacts chloride. R272 lines the substrate pocket. Residue N298 is glycosylated (N-linked (GlcNAc...) asparagine). An intrachain disulfide couples C343 to C360. 344–345 lines the substrate pocket; it reads HP. Position 373 (H373) interacts with Zn(2+). E374 acts as the Proton acceptor in catalysis. 2 residues coordinate Zn(2+): H377 and E401. N431 carries N-linked (GlcNAc...) asparagine glycosylation. Positions 476 and 480 each coordinate chloride. The Proton donor role is filled by H504. Y514 is a substrate binding site. Residues C529 and C541 are joined by a disulfide bond. N545 carries an N-linked (GlcNAc...) asparagine glycan. A Collectrin-like domain is found at 613-804; sequence SDQSIKVRIS…QNIDDVQTSL (192 aa). Positions 651–658 are essential for cleavage by ADAM17; it reads RKYFSEAR. 2 N-linked (GlcNAc...) asparagine glycosylation sites follow: N659 and N689. The segment at 696-715 is essential for cleavage by TMPRSS11D and TMPRSS2; that stretch reads RTEVENAIRLSRDRINDVFQ. The helical transmembrane segment at 740–760 threads the bilayer; it reads IWLIIFGVVMGVVVIGIVVLI. Over 761–804 the chain is Cytoplasmic; the sequence is FTGIRNRRKKNQASSEENPYGSVDLNKGENNSGFQNIDDVQTSL. Residues 771-804 form a disordered region; sequence NQASSEENPYGSVDLNKGENNSGFQNIDDVQTSL. The short motif at 777–785 is the LIR element; sequence ENPYGSVDL. Y780 carries the phosphotyrosine modification. Residues 780 to 783 carry the Endocytic sorting signal motif; that stretch reads YGSV. Positions 780–784 match the SH2-binding motif; sequence YGSVD. S782 carries the phosphoserine modification. A Glycyl lysine isopeptide (Lys-Gly) (interchain with G-Cter in ubiquitin) cross-link involves residue K787. Positions 788 to 804 are enriched in polar residues; that stretch reads GENNSGFQNIDDVQTSL. The PTB signature appears at 791–794; sequence NSGF. Residues 802 to 804 carry the PDZ-binding motif; that stretch reads TSL.

The protein belongs to the peptidase M2 family. Homodimer. Interacts with the catalytically active form of TMPRSS2. Interacts with SLC6A19; this interaction is essential for expression and function of SLC6A19 in intestine. Interacts with ITGA5:ITGB1. Probably interacts (via endocytic sorting signal motif) with AP2M1; the interaction is inhibited by phosphorylation of Tyr-780. Interacts (via PDZ-binding motif) with NHERF1 (via PDZ domains); the interaction may enhance ACE2 membrane residence. Zn(2+) is required as a cofactor. Chloride serves as cofactor. Proteolytic cleavage by ADAM17 generates a secreted form. Also cleaved by serine proteases: TMPRSS2, TMPRSS11D and HPN/TMPRSS1. Post-translationally, phosphorylated. Phosphorylation at Tyr-780 probably inhibits interaction with AP2M1 and enables interactions with proteins containing SH2 domains. In terms of processing, ubiquitinated. Ubiquitinated on Lys-787 via 'Lys-48'-linked ubiquitin. 'Lys-48'-linked deubiquitinated by USP50 on the Lys-787; leading to its stabilization.

Its subcellular location is the secreted. It localises to the cell membrane. The protein resides in the cytoplasm. It is found in the cell projection. The protein localises to the cilium. Its subcellular location is the apical cell membrane. It catalyses the reaction angiotensin II + H2O = angiotensin-(1-7) + L-phenylalanine. The enzyme catalyses angiotensin I + H2O = angiotensin-(1-9) + L-leucine. It carries out the reaction bradykinin(1-8) + H2O = bradykinin(1-7) + L-phenylalanine. The catalysed reaction is neurotensin + H2O = neurotensin-(1-12) + L-leucine. It catalyses the reaction kinetensin + H2O = kinetensin-(1-8) + L-leucine. The enzyme catalyses dynorphin A-(1-13) + H2O = dynorphin A-(1-12) + L-lysine. It carries out the reaction apelin-13 + H2O = apelin-12 + L-phenylalanine. The catalysed reaction is [Pyr1]apelin-13 + H2O = [Pyr1]apelin-12 + L-phenylalanine. It catalyses the reaction apelin-17 + H2O = apelin-16 + L-phenylalanine. Its function is as follows. Essential counter-regulatory carboxypeptidase of the renin-angiotensin hormone system that is a critical regulator of blood volume, systemic vascular resistance, and thus cardiovascular homeostasis. Converts angiotensin I to angiotensin 1-9, a nine-amino acid peptide with anti-hypertrophic effects in cardiomyocytes, and angiotensin II to angiotensin 1-7, which then acts as a beneficial vasodilator and anti-proliferation agent, counterbalancing the actions of the vasoconstrictor angiotensin II. Also removes the C-terminal residue from three other vasoactive peptides, neurotensin, kinetensin, and des-Arg bradykinin, but is not active on bradykinin. Also cleaves other biological peptides, such as apelins, casomorphins and dynorphin A. Plays an important role in amino acid transport by acting as binding partner of amino acid transporter SLC6A19 in intestine, regulating trafficking, expression on the cell surface, and its catalytic activity. This is Angiotensin-converting enzyme 2 (ACE2) from Bos taurus (Bovine).